A 662-amino-acid polypeptide reads, in one-letter code: UPF0313 protein CPF_1407 (662 aa).

The Radical SAM core domain maps to 296–567 (AIEEVKFSIV…AMQRALLQFK (272 aa)). The [4Fe-4S] cluster site is built by C310, C314, and C317. The segment at 596–662 (IRDKNSFGKG…QRSSKGKKRR (67 aa)) is disordered. Over residues 618–632 (SRNENSGRRESEDKK) the composition is skewed to basic and acidic residues. Positions 633 to 644 (RSSHSKKQRGNK) are enriched in basic residues.

The protein belongs to the UPF0313 family. It depends on [4Fe-4S] cluster as a cofactor.

This is UPF0313 protein CPF_1407 from Clostridium perfringens (strain ATCC 13124 / DSM 756 / JCM 1290 / NCIMB 6125 / NCTC 8237 / Type A).